Reading from the N-terminus, the 185-residue chain is uncharacterized protein (185 aa).

M1 is modified (N-acetylmethionine). 3 stretches are compositionally biased toward basic and acidic residues: residues 1–18 (MDAF…QDKQ), 26–47 (TPSD…TTEE), and 59–71 (SNED…PVLE). Disordered stretches follow at residues 1–71 (MDAF…PVLE) and 155–185 (DHDR…DGLL). A compositionally biased stretch (acidic residues) spans 170–185 (LPEELETDQDFLDGLL).

This is an uncharacterized protein from Saccharomyces cerevisiae (strain ATCC 204508 / S288c) (Baker's yeast).